The sequence spans 183 residues: Large ribosomal subunit protein uL5 (183 aa).

The protein belongs to the universal ribosomal protein uL5 family. Part of the 50S ribosomal subunit; part of the 5S rRNA/L5/L18/L25 subcomplex. Contacts the 5S rRNA and the P site tRNA. Forms a bridge to the 30S subunit in the 70S ribosome.

Its function is as follows. This is one of the proteins that bind and probably mediate the attachment of the 5S RNA into the large ribosomal subunit, where it forms part of the central protuberance. In the 70S ribosome it contacts protein S13 of the 30S subunit (bridge B1b), connecting the 2 subunits; this bridge is implicated in subunit movement. Contacts the P site tRNA; the 5S rRNA and some of its associated proteins might help stabilize positioning of ribosome-bound tRNAs. The polypeptide is Large ribosomal subunit protein uL5 (Kosmotoga olearia (strain ATCC BAA-1733 / DSM 21960 / TBF 19.5.1)).